A 378-amino-acid chain; its full sequence is Dual-specificity RNA methyltransferase RlmN (378 aa).

The active-site Proton acceptor is the glutamate 96. Positions 102 to 340 constitute a Radical SAM core domain; it reads DNGRGTLCVS…ATVRTTRGDD (239 aa). Cysteine 109 and cysteine 345 form a disulfide bridge. 3 residues coordinate [4Fe-4S] cluster: cysteine 116, cysteine 120, and cysteine 123. Residues 170–171, serine 202, 224–226, and asparagine 302 contribute to the S-adenosyl-L-methionine site; these read GE and SLH. The S-methylcysteine intermediate role is filled by cysteine 345.

This sequence belongs to the radical SAM superfamily. RlmN family. [4Fe-4S] cluster is required as a cofactor.

It is found in the cytoplasm. The catalysed reaction is adenosine(2503) in 23S rRNA + 2 reduced [2Fe-2S]-[ferredoxin] + 2 S-adenosyl-L-methionine = 2-methyladenosine(2503) in 23S rRNA + 5'-deoxyadenosine + L-methionine + 2 oxidized [2Fe-2S]-[ferredoxin] + S-adenosyl-L-homocysteine. The enzyme catalyses adenosine(37) in tRNA + 2 reduced [2Fe-2S]-[ferredoxin] + 2 S-adenosyl-L-methionine = 2-methyladenosine(37) in tRNA + 5'-deoxyadenosine + L-methionine + 2 oxidized [2Fe-2S]-[ferredoxin] + S-adenosyl-L-homocysteine. Specifically methylates position 2 of adenine 2503 in 23S rRNA and position 2 of adenine 37 in tRNAs. m2A2503 modification seems to play a crucial role in the proofreading step occurring at the peptidyl transferase center and thus would serve to optimize ribosomal fidelity. This is Dual-specificity RNA methyltransferase RlmN from Hahella chejuensis (strain KCTC 2396).